Reading from the N-terminus, the 187-residue chain is UPF0340 protein SPP_0683 (187 aa).

The protein belongs to the UPF0340 family.

In Streptococcus pneumoniae (strain P1031), this protein is UPF0340 protein SPP_0683.